The sequence spans 172 residues: MERAIQGNDTREQANGERWDGGSGGITSPFKLPDESPSWTEWRLYNDETNSNQDNPLGFKESWGFGKVVFKRYLRYDRTEASLHRVLGSWTGDSVNYAASRFLGANQVGCTYSIRFRGVSVTISGGSRTLQHLCEMAIRSKQELLQLTPVEVESNVSRGCPEGIETFKKESE.

Residues 1 to 20 show a composition bias toward basic and acidic residues; the sequence is MERAIQGNDTREQANGERWD. A disordered region spans residues 1 to 27; the sequence is MERAIQGNDTREQANGERWDGGSGGIT.

Belongs to the tombusvirus protein p19 family. As to quaternary structure, homodimer.

In terms of biological role, acts as a suppressor of RNA-mediated gene silencing, also known as post-transcriptional gene silencing (PTGS), a mechanism of plant viral defense that limits the accumulation of viral RNAs. Binds to short interfering RNAs (siRNAs) with high affinity. Acts as a molecular caliper to specifically select siRNAs based on the length of the duplex region of the RNA. This Dianthus caryophyllus (Carnation) protein is RNA silencing suppressor p19.